The following is a 240-amino-acid chain: Citrate synthase-lysine N-methyltransferase CSKMT, mitochondrial (240 aa).

Residues 1-28 (MAALRRMLHLPSLMMGTCRPFAGSLADS) constitute a mitochondrion transit peptide.

The protein belongs to the methyltransferase superfamily.

The protein localises to the mitochondrion. The catalysed reaction is L-lysyl-[citrate synthase] + S-adenosyl-L-methionine = N(6)-methyl-L-lysyl-[citrate synthase] + S-adenosyl-L-homocysteine + H(+). The enzyme catalyses N(6)-methyl-L-lysyl-[citrate synthase] + S-adenosyl-L-methionine = N(6),N(6)-dimethyl-L-lysyl-[citrate synthase] + S-adenosyl-L-homocysteine + H(+). It catalyses the reaction N(6),N(6)-dimethyl-L-lysyl-[citrate synthase] + S-adenosyl-L-methionine = N(6),N(6),N(6)-trimethyl-L-lysyl-[citrate synthase] + S-adenosyl-L-homocysteine + H(+). Citrate synthase-lysine methyltransferase activity is inhibited by S-adenosylhomocysteine (AdoHcy) and oxaloacetate (OAA). In terms of biological role, protein-lysine methyltransferase that selectively trimethylates citrate synthase (CS) in mitochondria. Seems to conduct trimethylation in a highly distributive manner rather than in a processive manner, and thus introduces a single methyl group per binding event. The sequence is that of Citrate synthase-lysine N-methyltransferase CSKMT, mitochondrial from Homo sapiens (Human).